A 627-amino-acid chain; its full sequence is Serine/threonine-protein kinase Nek5 (627 aa).

The Protein kinase domain maps to 4-255; the sequence is FHLIKIIGEG…VTSLLKRPFL (252 aa). Residues 10 to 18 and K33 contribute to the ATP site; that span reads IGEGTFGKV. Residue D124 is the Proton acceptor of the active site. Positions 563-580 are enriched in acidic residues; it reads QLEPGSDEDDIKFEESED. 2 disordered regions span residues 563–582 and 591–627; these read QLEPGSDEDDIKFEESEDEL and EKLAASTEEAEQAPSSSKNAEEPGEKEKTNLPVKKLQ. The span at 609-619 shows a compositional bias: basic and acidic residues; it reads NAEEPGEKEKT.

Belongs to the protein kinase superfamily. NEK Ser/Thr protein kinase family. NIMA subfamily. Mg(2+) is required as a cofactor.

It is found in the cell projection. Its subcellular location is the cilium. The protein localises to the flagellum. It catalyses the reaction L-seryl-[protein] + ATP = O-phospho-L-seryl-[protein] + ADP + H(+). The enzyme catalyses L-threonyl-[protein] + ATP = O-phospho-L-threonyl-[protein] + ADP + H(+). This Mus musculus (Mouse) protein is Serine/threonine-protein kinase Nek5 (Nek5).